Consider the following 266-residue polypeptide: Zinc finger protein SNAI2 (266 aa).

Residues Met-1 to Gly-20 are SNAG domain. Residues Ser-75–Leu-115 form a disordered region. 4 C2H2-type zinc fingers span residues Phe-126 to His-148, Phe-157 to His-179, Cys-183 to His-205, and Phe-211 to His-233. A C2H2-type 5; atypical zinc finger spans residues Tyr-239 to Cys-262.

This sequence belongs to the snail C2H2-type zinc-finger protein family. As to quaternary structure, interacts (via SNAG domain) with limd1 (via LIM domains), wtip (via LIM domains) and ajuba (via LIM domains). Interacts with elp3. First expressed on the lateral side of stage 12 embryos. At stage 14, strongly expressed in the lateral neural folds. At stage 16, expressed in pre-migratory neural crest cells. At stage 18, expression is dispersed over the neural plate in a pattern surrounding the rhombomeres. At stage 22, expressed in neural crest derivatives, including the branchial arches and the tissues surrounding the eyes and forebrain. After stage 17, expression is weak in the lateral plate mesoderm, increasing at stage 26, but was down-regulated in the pronephros region at stage 26.

It is found in the nucleus. Probable transcriptional repressor. Acts downstream of snai1 in the specification of the neural crest and neural crest migration. The sequence is that of Zinc finger protein SNAI2 (snai2) from Xenopus laevis (African clawed frog).